The primary structure comprises 367 residues: Mitochondrial distribution and morphology protein 34 (367 aa).

The 197-residue stretch at 1 to 197 folds into the SMP-LTD domain; that stretch reads MSFNFTWPEF…LPSIIHRLSQ (197 aa). Disordered regions lie at residues 267–311 and 347–367; these read QGLK…ALSS and PAHR…FHLS. Over residues 286 to 302 the composition is skewed to polar residues; it reads FHTTSRVRVPSSLESNA.

It belongs to the MDM34 family. As to quaternary structure, component of the ER-mitochondria encounter structure (ERMES) or MDM complex, composed of MMM1, MDM10, MDM12 and MDM34.

It is found in the mitochondrion outer membrane. Component of the ERMES/MDM complex, which serves as a molecular tether to connect the endoplasmic reticulum (ER) and mitochondria. Components of this complex are involved in the control of mitochondrial shape and protein biogenesis, and function in nonvesicular lipid trafficking between the ER and mitochondria. MDM34 is required for the interaction of the ER-resident membrane protein MMM1 and the outer mitochondrial membrane-resident beta-barrel protein MDM10. The chain is Mitochondrial distribution and morphology protein 34 from Malassezia globosa (strain ATCC MYA-4612 / CBS 7966) (Dandruff-associated fungus).